Reading from the N-terminus, the 476-residue chain is MIQVLLVTICLAAFPYQGSSIILESGNVNDYEVVYARKVTELPKGAVQQKYEDAMQYEFKVNGEPVVLHLEKNKGLFSEDYSETHYSPDGRQIITYPPFEDHCYYHGRIENDADSTASISACNGLKGHFKLQGETYLIEPLKLPDSEAHAVYKYENVEKEDEAPKMCGVTETNWESYEPIEKASQSNLTPEQQKFSPRYIELAVVADHGMFTKYNSNLNTIRTRVHEMVNTLNGFFRSVNVDASLANLEVWSKKDLIKVEKDSSKTLTSFGEWRERDLLPRISHDHAQLLTTIVFDQQTIGLAYTAGMCDPRQSVAVVMDHSKKNLRVAVTMAHELGHNLGMDHDDTCTCGAKSCIMASTISKGLSFEFSKCSQNQYQTYLTDHNPQCILNKPLTTVSGNELLEAGEECDCGAPENPCCDAATCKLRPRAQCAEGLCCDQCRFKGAGKICRRARGDNPDDRCTGQSADCPRNRFHA.

The signal sequence occupies residues 1–20 (MIQVLLVTICLAAFPYQGSS). A propeptide spanning residues 21–192 (IILESGNVND…ASQSNLTPEQ (172 aa)) is cleaved from the precursor. Residue glutamine 193 is modified to Pyrrolidone carboxylic acid. In terms of domain architecture, Peptidase M12B spans 198–393 (RYIELAVVAD…HNPQCILNKP (196 aa)). The Ca(2+) site is built by glutamate 201 and aspartate 285. Cystine bridges form between cysteine 309-cysteine 388, cysteine 348-cysteine 372, and cysteine 350-cysteine 355. Position 334 (histidine 334) interacts with Zn(2+). The active site involves glutamate 335. 2 residues coordinate Zn(2+): histidine 338 and histidine 344. Residues cysteine 388 and asparagine 391 each coordinate Ca(2+). The propeptide occupies 394 to 403 (LTTVSGNELL). One can recognise a Disintegrin domain in the interval 395–476 (TTVSGNELLE…ADCPRNRFHA (82 aa)). 6 cysteine pairs are disulfide-bonded: cysteine 409–cysteine 424, cysteine 411–cysteine 419, cysteine 418–cysteine 441, cysteine 432–cysteine 438, cysteine 437–cysteine 462, and cysteine 450–cysteine 469. The Cell attachment site motif lies at 454–456 (RGD).

It belongs to the venom metalloproteinase (M12B) family. P-II subfamily. P-IIa sub-subfamily. As to quaternary structure, monomer (metalloprotease). The cofactor is Zn(2+). Post-translationally, the N-terminus is blocked. In terms of processing, not glycosylated. As to expression, expressed by the venom gland.

The protein localises to the secreted. With respect to regulation, inhibited by EDTA, and 1,10-phenanthroline, but not by PMSF. Functionally, non-hemorrhagic proteinase that activates prothrombin (F2) calcium-independently. Activates factor X (F10) and hydrolyzes the Aalpha-chain and more slowly the Bbeta-chain of fibrin and fibrinogen without affecting the gamma chain. It induces neither detachment nor apoptosis of human endothelial cells and is also not able to trigger an endothelial pro-inflammatory cell response. Nitric oxide and prostacyclin levels released by endothelial cells are significantly increased after treatment with insularinase A. Its function is as follows. Inhibits ADP-induced platelet aggregation (IC(50)=0.8 uM for native protein). Interestingly, inhibits the adhesion of HUVECs to immobilized fibrinogen at very low concentrations (IC(50)=36 nM). This chain is Zinc metalloproteinase/disintegrin, found in Bothrops insularis (Golden lancehead).